The following is a 583-amino-acid chain: Putative glutaminase 3 (583 aa).

The disordered stretch occupies residues M1–T29. Residues S216, N265, E311, N318, Y344, Y396, and V414 each coordinate substrate. ANK repeat units follow at residues D482 to Y514, D515 to R548, and Y549 to Q581.

The protein belongs to the glutaminase family.

The catalysed reaction is L-glutamine + H2O = L-glutamate + NH4(+). This chain is Putative glutaminase 3 (glna-3), found in Caenorhabditis elegans.